The primary structure comprises 63 residues: 2-hydroxymuconate tautomerase (63 aa).

Residue proline 2 is the Proton acceptor; via imino nitrogen of the active site.

The protein belongs to the 4-oxalocrotonate tautomerase family. As to quaternary structure, homohexamer.

The catalysed reaction is (2Z,4E)-2-hydroxyhexa-2,4-dienedioate = (3E)-2-oxohex-3-enedioate. The protein operates within aromatic compound metabolism; salicylate degradation. Catalyzes the ketonization of 2-hydroxymuconate stereoselectively to yield 2-oxo-3-hexenedioate. This Pseudomonas putida (Arthrobacter siderocapsulatus) protein is 2-hydroxymuconate tautomerase (nahJ).